The following is a 147-amino-acid chain: Hemoglobin subunit beta (147 aa).

The 145-residue stretch at 3-147 folds into the Globin domain; it reads NWTKTEKATI…VMSALGKQYH (145 aa). His64 and His93 together coordinate heme b.

Belongs to the globin family. In terms of assembly, heterotetramer of two alpha chains and two beta chains. As to expression, red blood cells.

Its function is as follows. Involved in oxygen transport from gills to the various peripheral tissues. This is Hemoglobin subunit beta (hbb) from Gymnodraco acuticeps (Antarctic dragonfish).